The sequence spans 336 residues: Glucokinase (336 aa).

12 to 17 (ADIGGT) contacts ATP.

It belongs to the bacterial glucokinase family.

It localises to the cytoplasm. The enzyme catalyses D-glucose + ATP = D-glucose 6-phosphate + ADP + H(+). This chain is Glucokinase, found in Helicobacter acinonychis (strain Sheeba).